The sequence spans 321 residues: Lipoyl synthase (321 aa).

Residues Cys-68, Cys-73, Cys-79, Cys-94, Cys-98, Cys-101, and Ser-308 each coordinate [4Fe-4S] cluster. The region spanning 80–297 (FNHGTATFMI…KVLADELGFT (218 aa)) is the Radical SAM core domain.

It belongs to the radical SAM superfamily. Lipoyl synthase family. Requires [4Fe-4S] cluster as cofactor.

It localises to the cytoplasm. The catalysed reaction is [[Fe-S] cluster scaffold protein carrying a second [4Fe-4S](2+) cluster] + N(6)-octanoyl-L-lysyl-[protein] + 2 oxidized [2Fe-2S]-[ferredoxin] + 2 S-adenosyl-L-methionine + 4 H(+) = [[Fe-S] cluster scaffold protein] + N(6)-[(R)-dihydrolipoyl]-L-lysyl-[protein] + 4 Fe(3+) + 2 hydrogen sulfide + 2 5'-deoxyadenosine + 2 L-methionine + 2 reduced [2Fe-2S]-[ferredoxin]. Its pathway is protein modification; protein lipoylation via endogenous pathway; protein N(6)-(lipoyl)lysine from octanoyl-[acyl-carrier-protein]: step 2/2. Its function is as follows. Catalyzes the radical-mediated insertion of two sulfur atoms into the C-6 and C-8 positions of the octanoyl moiety bound to the lipoyl domains of lipoate-dependent enzymes, thereby converting the octanoylated domains into lipoylated derivatives. This Shewanella denitrificans (strain OS217 / ATCC BAA-1090 / DSM 15013) protein is Lipoyl synthase.